A 449-amino-acid chain; its full sequence is Bifunctional protein GlmU (449 aa).

The pyrophosphorylase stretch occupies residues 1–229 (MKLSAVILAA…EEDIYGINDR (229 aa)). UDP-N-acetyl-alpha-D-glucosamine is bound by residues 8 to 11 (LAAG), K22, Q73, and 78 to 79 (GT). D102 is a binding site for Mg(2+). Residues G139, E154, N169, and N227 each contribute to the UDP-N-acetyl-alpha-D-glucosamine site. Residue N227 participates in Mg(2+) binding. Residues 230–250 (VQLAQAENILRQRKNRELMLS) form a linker region. Residues 251-449 (GVSLMDPAST…AGQKHLPRKG (199 aa)) are N-acetyltransferase. Positions 332 and 350 each coordinate UDP-N-acetyl-alpha-D-glucosamine. H362 (proton acceptor) is an active-site residue. Positions 365 and 376 each coordinate UDP-N-acetyl-alpha-D-glucosamine. Acetyl-CoA is bound by residues A379, 385 to 386 (NY), S404, A422, and R439.

In the N-terminal section; belongs to the N-acetylglucosamine-1-phosphate uridyltransferase family. It in the C-terminal section; belongs to the transferase hexapeptide repeat family. In terms of assembly, homotrimer. Mg(2+) serves as cofactor.

The protein localises to the cytoplasm. It catalyses the reaction alpha-D-glucosamine 1-phosphate + acetyl-CoA = N-acetyl-alpha-D-glucosamine 1-phosphate + CoA + H(+). The catalysed reaction is N-acetyl-alpha-D-glucosamine 1-phosphate + UTP + H(+) = UDP-N-acetyl-alpha-D-glucosamine + diphosphate. Its pathway is nucleotide-sugar biosynthesis; UDP-N-acetyl-alpha-D-glucosamine biosynthesis; N-acetyl-alpha-D-glucosamine 1-phosphate from alpha-D-glucosamine 6-phosphate (route II): step 2/2. It participates in nucleotide-sugar biosynthesis; UDP-N-acetyl-alpha-D-glucosamine biosynthesis; UDP-N-acetyl-alpha-D-glucosamine from N-acetyl-alpha-D-glucosamine 1-phosphate: step 1/1. The protein operates within bacterial outer membrane biogenesis; LPS lipid A biosynthesis. Functionally, catalyzes the last two sequential reactions in the de novo biosynthetic pathway for UDP-N-acetylglucosamine (UDP-GlcNAc). The C-terminal domain catalyzes the transfer of acetyl group from acetyl coenzyme A to glucosamine-1-phosphate (GlcN-1-P) to produce N-acetylglucosamine-1-phosphate (GlcNAc-1-P), which is converted into UDP-GlcNAc by the transfer of uridine 5-monophosphate (from uridine 5-triphosphate), a reaction catalyzed by the N-terminal domain. The chain is Bifunctional protein GlmU from Syntrophomonas wolfei subsp. wolfei (strain DSM 2245B / Goettingen).